A 51-amino-acid chain; its full sequence is Putative inactivation escape 1 protein (51 aa).

As to expression, highly expressed in pancreas, heart and liver followed by brain, placenta, lung, skeletal muscle and kidney. Mostly expressed in females.

This Homo sapiens (Human) protein is Putative inactivation escape 1 protein (INE1).